The primary structure comprises 495 residues: Ribose import ATP-binding protein RbsA 3 (495 aa).

ABC transporter domains lie at 5-240 and 250-492; these read VRLR…VGRE and AEIG…TGVK. 37 to 44 is a binding site for ATP; it reads GENGAGKS.

It belongs to the ABC transporter superfamily. Ribose importer (TC 3.A.1.2.1) family. In terms of assembly, the complex is composed of an ATP-binding protein (RbsA), two transmembrane proteins (RbsC) and a solute-binding protein (RbsB).

The protein resides in the cell membrane. It carries out the reaction D-ribose(out) + ATP + H2O = D-ribose(in) + ADP + phosphate + H(+). In terms of biological role, part of the ABC transporter complex RbsABC involved in ribose import. Responsible for energy coupling to the transport system. The sequence is that of Ribose import ATP-binding protein RbsA 3 from Rubrobacter xylanophilus (strain DSM 9941 / JCM 11954 / NBRC 16129 / PRD-1).